The sequence spans 83 residues: RNA-binding protein Hfq (83 aa).

Residues 9-69 (DYFLNQLRKD…ISTFAPARNV (61 aa)) enclose the Sm domain.

This sequence belongs to the Hfq family. In terms of assembly, homohexamer.

RNA chaperone that binds small regulatory RNA (sRNAs) and mRNAs to facilitate mRNA translational regulation in response to envelope stress, environmental stress and changes in metabolite concentrations. Also binds with high specificity to tRNAs. The sequence is that of RNA-binding protein Hfq from Exiguobacterium sibiricum (strain DSM 17290 / CCUG 55495 / CIP 109462 / JCM 13490 / 255-15).